We begin with the raw amino-acid sequence, 172 residues long: Cystatin-like cysteine protease inhibitor EPIC4 (172 aa).

Residues M1 to A17 form the signal peptide. A Secondary area of contact motif is present at residues Q71–G75. The segment at E129–V172 is disordered. Residues A130–T156 are compositionally biased toward low complexity. Polar residues predominate over residues M157 to A166.

Belongs to the cystatin family.

It localises to the secreted. Functionally, secreted effector that interacts with and inhibits host apoplastic pathogenesis-related papain-like cysteine proteases. Inhibition of host proteases by a pathogen extracellular protease inhibitor forms a specific type of defense-counterdefense mechanism between plants and microbial pathogens. The polypeptide is Cystatin-like cysteine protease inhibitor EPIC4 (Phytophthora infestans (Potato late blight agent)).